The sequence spans 94 residues: Co-chaperonin GroES (94 aa).

This sequence belongs to the GroES chaperonin family. As to quaternary structure, heptamer of 7 subunits arranged in a ring. Interacts with the chaperonin GroEL.

Its subcellular location is the cytoplasm. Functionally, together with the chaperonin GroEL, plays an essential role in assisting protein folding. The GroEL-GroES system forms a nano-cage that allows encapsulation of the non-native substrate proteins and provides a physical environment optimized to promote and accelerate protein folding. GroES binds to the apical surface of the GroEL ring, thereby capping the opening of the GroEL channel. This is Co-chaperonin GroES from Anoxybacillus flavithermus (strain DSM 21510 / WK1).